A 534-amino-acid chain; its full sequence is Protein tweety homolog 2 (534 aa).

Over 1 to 44 (MATARVEYIAPWWVYWLHNLPHVDFSLQRESGDFNPKDPGYQQT) the chain is Extracellular. The helical transmembrane segment at 45–65 (LLFVALFIALCAAVNLLFVSG) threads the bilayer. Residues 66 to 87 (YLICLCCCKKEDETETKMTSSC) lie on the Cytoplasmic side of the membrane. The chain crosses the membrane as a helical span at residues 88–108 (CVTWTAAVSGLLCCAAVGIGF). At 109 to 213 (YGNSETNDGV…NASIIEYYRW (105 aa)) the chain is on the extracellular side. Residues Glu-113 and Asp-116 each coordinate Ca(2+). Asn-129 carries N-linked (GlcNAc...) asparagine glycosylation. Positions 164 to 166 (RGD) match the RGD motif. N-linked (GlcNAc...) asparagine glycans are attached at residues Asn-197 and Asn-204. The helical transmembrane segment at 214 to 234 (LSYLILFITDVVICLVTCLGL) threads the bilayer. At 235–240 (AKKSKC) the chain is on the cytoplasmic side. A helical membrane pass occupies residues 241–261 (LLLTMLCCGLIALMLSWASLA). The Extracellular portion of the chain corresponds to 262–388 (LETSSAVGTS…IGICYDGVEG (127 aa)). Cystine bridges form between Cys-274-Cys-382 and Cys-300-Cys-367. N-linked (GlcNAc...) asparagine glycosylation occurs at Asn-352. A helical transmembrane segment spans residues 389–409 (LLYLSLFSLLAAVAFTAMVCA). The Cytoplasmic portion of the chain corresponds to 410–534 (MPRAWKHLAA…PNIYSNVFPA (125 aa)).

This sequence belongs to the tweety family. Forms cis-homodimers in the presence of Ca(+2) and forms monomers and trans-dimers in the absence of Ca(2+).

The protein resides in the cell membrane. It carries out the reaction chloride(in) = chloride(out). It catalyses the reaction L-glutamate(out) = L-glutamate(in). May act as a calcium-independent, swelling-dependent volume-regulated anion channel (VRAC-swell) which plays a pivotal role in the process of regulatory volume decrease (RVD) in the brain through the efflux of anions like chloride and organic osmolytes like glutamate. Probable large-conductance Ca(2+)-activated chloride channel. The sequence is that of Protein tweety homolog 2 (ttyh2) from Xenopus laevis (African clawed frog).